A 369-amino-acid chain; its full sequence is Glutamate 5-kinase (369 aa).

Residue Lys14 participates in ATP binding. 3 residues coordinate substrate: Ser56, Asp143, and Asn155. ATP-binding positions include 175–176 and 215–221; these read SD and TGGMASK. The region spanning 277 to 351 is the PUA domain; that stretch reads AGKIRLDQGA…GMKTQELPDD (75 aa).

It belongs to the glutamate 5-kinase family.

It localises to the cytoplasm. The enzyme catalyses L-glutamate + ATP = L-glutamyl 5-phosphate + ADP. Its pathway is amino-acid biosynthesis; L-proline biosynthesis; L-glutamate 5-semialdehyde from L-glutamate: step 1/2. Functionally, catalyzes the transfer of a phosphate group to glutamate to form L-glutamate 5-phosphate. The chain is Glutamate 5-kinase from Corynebacterium efficiens (strain DSM 44549 / YS-314 / AJ 12310 / JCM 11189 / NBRC 100395).